The sequence spans 238 residues: Probable transcriptional regulatory protein CAB166 (238 aa).

This sequence belongs to the TACO1 family.

Its subcellular location is the cytoplasm. The chain is Probable transcriptional regulatory protein CAB166 from Chlamydia abortus (strain DSM 27085 / S26/3) (Chlamydophila abortus).